Reading from the N-terminus, the 344-residue chain is Holliday junction branch migration complex subunit RuvB (344 aa).

Residues 1–181 (MERIVTPAEM…FGVLCAMEYY (181 aa)) form a large ATPase domain (RuvB-L) region. ATP is bound by residues Leu20, Arg21, Gly62, Lys65, Thr66, Thr67, 128-130 (EDY), Arg171, Tyr181, and Arg218. Position 66 (Thr66) interacts with Mg(2+). The tract at residues 182–252 (DETQLKEIVI…EARDALELLE (71 aa)) is small ATPAse domain (RuvB-S). The segment at 255–344 (NQGFDKVDNK…SNKGQTSFFK (90 aa)) is head domain (RuvB-H). Arg310 and Arg315 together coordinate DNA.

It belongs to the RuvB family. As to quaternary structure, homohexamer. Forms an RuvA(8)-RuvB(12)-Holliday junction (HJ) complex. HJ DNA is sandwiched between 2 RuvA tetramers; dsDNA enters through RuvA and exits via RuvB. An RuvB hexamer assembles on each DNA strand where it exits the tetramer. Each RuvB hexamer is contacted by two RuvA subunits (via domain III) on 2 adjacent RuvB subunits; this complex drives branch migration. In the full resolvosome a probable DNA-RuvA(4)-RuvB(12)-RuvC(2) complex forms which resolves the HJ.

It localises to the cytoplasm. It carries out the reaction ATP + H2O = ADP + phosphate + H(+). The RuvA-RuvB-RuvC complex processes Holliday junction (HJ) DNA during genetic recombination and DNA repair, while the RuvA-RuvB complex plays an important role in the rescue of blocked DNA replication forks via replication fork reversal (RFR). RuvA specifically binds to HJ cruciform DNA, conferring on it an open structure. The RuvB hexamer acts as an ATP-dependent pump, pulling dsDNA into and through the RuvAB complex. RuvB forms 2 homohexamers on either side of HJ DNA bound by 1 or 2 RuvA tetramers; 4 subunits per hexamer contact DNA at a time. Coordinated motions by a converter formed by DNA-disengaged RuvB subunits stimulates ATP hydrolysis and nucleotide exchange. Immobilization of the converter enables RuvB to convert the ATP-contained energy into a lever motion, pulling 2 nucleotides of DNA out of the RuvA tetramer per ATP hydrolyzed, thus driving DNA branch migration. The RuvB motors rotate together with the DNA substrate, which together with the progressing nucleotide cycle form the mechanistic basis for DNA recombination by continuous HJ branch migration. Branch migration allows RuvC to scan DNA until it finds its consensus sequence, where it cleaves and resolves cruciform DNA. In Clostridium botulinum (strain Eklund 17B / Type B), this protein is Holliday junction branch migration complex subunit RuvB.